The following is a 432-amino-acid chain: Adenylosuccinate synthetase (432 aa).

GTP is bound by residues 16–22 and 44–46; these read GDEGKGK and GHM. Aspartate 17 serves as the catalytic Proton acceptor. Mg(2+) is bound by residues aspartate 17 and glycine 44. IMP-binding positions include 17–20, 42–45, threonine 132, arginine 146, glutamine 226, threonine 241, and arginine 305; these read DEGK and NAGH. Histidine 45 (proton donor) is an active-site residue. 301 to 307 is a binding site for substrate; sequence LNTGRPR. Residues arginine 307, 333–335, and 415–417 each bind GTP; these read LFD and SVG.

This sequence belongs to the adenylosuccinate synthetase family. In terms of assembly, homodimer. It depends on Mg(2+) as a cofactor.

Its subcellular location is the cytoplasm. It catalyses the reaction IMP + L-aspartate + GTP = N(6)-(1,2-dicarboxyethyl)-AMP + GDP + phosphate + 2 H(+). Its pathway is purine metabolism; AMP biosynthesis via de novo pathway; AMP from IMP: step 1/2. Its function is as follows. Plays an important role in the de novo pathway of purine nucleotide biosynthesis. Catalyzes the first committed step in the biosynthesis of AMP from IMP. The chain is Adenylosuccinate synthetase from Mycoplasma mycoides subsp. mycoides SC (strain CCUG 32753 / NCTC 10114 / PG1).